We begin with the raw amino-acid sequence, 209 residues long: A-type ATP synthase subunit D (209 aa).

Belongs to the V-ATPase D subunit family. Has multiple subunits, A(3), B(3), C, D, E, F, G, I and K(x); there may be a few other subunits as well.

It is found in the cell membrane. Component of the A-type ATP synthase that produces ATP from ADP in the presence of a proton gradient across the membrane. This Methanosarcina mazei (strain ATCC BAA-159 / DSM 3647 / Goe1 / Go1 / JCM 11833 / OCM 88) (Methanosarcina frisia) protein is A-type ATP synthase subunit D.